A 155-amino-acid polypeptide reads, in one-letter code: Glycosylation-dependent cell adhesion molecule 1 (155 aa).

Residues Met1–Ala18 form the signal peptide. Residue Thr34 is glycosylated (O-linked (GalNAc...) threonine). A phosphoserine mark is found at Ser48, Ser53, Ser57, Ser59, and Ser65. The disordered stretch occupies residues Ala74–Pro109. A compositionally biased stretch (polar residues) spans Gln90 to Ser101.

This sequence belongs to the PP3/GlyCAM-1 family. In terms of tissue distribution, highly expressed in whey fraction of camel milk.

This Camelus dromedarius (Dromedary) protein is Glycosylation-dependent cell adhesion molecule 1 (GLYCAM1).